The following is a 119-amino-acid chain: Large ribosomal subunit protein uL22 (119 aa).

It belongs to the universal ribosomal protein uL22 family. Part of the 50S ribosomal subunit.

In terms of biological role, this protein binds specifically to 23S rRNA; its binding is stimulated by other ribosomal proteins, e.g. L4, L17, and L20. It is important during the early stages of 50S assembly. It makes multiple contacts with different domains of the 23S rRNA in the assembled 50S subunit and ribosome. Functionally, the globular domain of the protein is located near the polypeptide exit tunnel on the outside of the subunit, while an extended beta-hairpin is found that lines the wall of the exit tunnel in the center of the 70S ribosome. This chain is Large ribosomal subunit protein uL22, found in Trichodesmium erythraeum (strain IMS101).